The following is a 496-amino-acid chain: Flt3-interacting zinc finger protein 1 (496 aa).

An N-acetylmethionine modification is found at methionine 1. 6 C2H2-type zinc fingers span residues 23–45 (FHCS…FARH), 51–73 (HACP…LRSH), 79–101 (YRCS…QVVH), 107–130 (YCCL…KRQH), 200–222 (FACG…WAAH), and 228–250 (FKCP…KLTH). Positions 250–280 (HDLQGPGAPPAQAWAAGPGAGPETAGEGTAA) are disordered. Residues 259-280 (PAQAWAAGPGAGPETAGEGTAA) show a composition bias toward low complexity. 5 consecutive C2H2-type zinc fingers follow at residues 331 to 352 (YQCD…LEAH), 358 to 381 (YGCG…RVSH), 414 to 436 (FGCS…VLVH), 442 to 464 (FPCL…RLLH), and 470 to 492 (FPCH…LKLH). Residues 378–412 (RVSHGEGGGEEAATAAREREPASGEPPSGSGRGKK) form a disordered region.

In terms of assembly, interacts with FLT3 cytoplasmic catalytic domain, following receptor stimulation, in a kinase-independent manner. Does not interact with other structurally related receptor tyrosine kinases, including KIT, CSF1R and PDGFR. Interacts with NRL. As to expression, widely expressed.

Its subcellular location is the cytoplasm. The protein localises to the nucleus. Its function is as follows. May be a transcriptional repressor of NRL function in photoreceptors. Does not repress CRX-mediated transactivation. The chain is Flt3-interacting zinc finger protein 1 (FIZ1) from Homo sapiens (Human).